A 339-amino-acid chain; its full sequence is Protein-glutamate methylesterase/protein-glutamine glutaminase 2 (339 aa).

In terms of domain architecture, Response regulatory spans 2-119 (NIGIVNDLPL…GLSTDASPQA (118 aa)). A 4-aspartylphosphate modification is found at D53. In terms of domain architecture, CheB-type methylesterase spans 141 to 336 (PGPAPERGQP…PQLISRITRP (196 aa)). Active-site residues include S158, H185, and D278.

It belongs to the CheB family. In terms of processing, phosphorylated by CheA. Phosphorylation of the N-terminal regulatory domain activates the methylesterase activity.

It is found in the cytoplasm. The catalysed reaction is [protein]-L-glutamate 5-O-methyl ester + H2O = L-glutamyl-[protein] + methanol + H(+). It catalyses the reaction L-glutaminyl-[protein] + H2O = L-glutamyl-[protein] + NH4(+). Involved in chemotaxis. Part of a chemotaxis signal transduction system that modulates chemotaxis in response to various stimuli. Catalyzes the demethylation of specific methylglutamate residues introduced into the chemoreceptors (methyl-accepting chemotaxis proteins or MCP) by CheR. Also mediates the irreversible deamidation of specific glutamine residues to glutamic acid. The sequence is that of Protein-glutamate methylesterase/protein-glutamine glutaminase 2 from Burkholderia lata (strain ATCC 17760 / DSM 23089 / LMG 22485 / NCIMB 9086 / R18194 / 383).